Here is a 657-residue protein sequence, read N- to C-terminus: Glycogen debranching enzyme (657 aa).

D334 acts as the Nucleophile in catalysis. E369 functions as the Proton donor in the catalytic mechanism. The tract at residues A458–T485 is disordered. The span at D465–H475 shows a compositional bias: polar residues.

The protein belongs to the glycosyl hydrolase 13 family.

It is found in the cytoplasm. It carries out the reaction Hydrolysis of (1-&gt;6)-alpha-D-glucosidic linkages to branches with degrees of polymerization of three or four glucose residues in limit dextrin.. It participates in glycan degradation; glycogen degradation. Its activity is regulated as follows. Slightly activated by Ca(2+). Inhibited by divalent cations such as Zn(2+), Cu(2+), Fe(2+), Mg(2+), Mn(2+), but only slightly inhibited by EDTA. Functionally, removes maltotriose and maltotetraose chains that are attached by 1,6-alpha-linkage to the limit dextrin main chain, generating a debranched limit dextrin. Hydrolyzes the alpha-1,6-glycosidic linkages in amylopectin while does not hydrolyze the alpha-1,4-glycosidic linkages in amylose. Native glycogen is a poor substrate. The chain is Glycogen debranching enzyme from Dickeya chrysanthemi (Pectobacterium chrysanthemi).